A 149-amino-acid polypeptide reads, in one-letter code: Endothelin-1 (149 aa).

The propeptide occupies 1–33 (AAETVVSGAELSLTANSGGEKTPPHAPGLLRRS). Residues 6-26 (VSGAELSLTANSGGEKTPPHA) are disordered. 2 disulfide bridges follow: cysteine 36–cysteine 50 and cysteine 38–cysteine 46. Positions 57–149 (VNTPGHIAPY…ISQQLGNGKK (93 aa)) are excised as a propeptide. The interval 93 to 107 (CQCANQKDKKCWNFC) is endothelin-like.

It belongs to the endothelin/sarafotoxin family.

Its subcellular location is the secreted. Endothelins are endothelium-derived vasoconstrictor peptides. Probable ligand for G-protein coupled receptors EDNRA and EDNRB which activates PTK2B, BCAR1, BCAR3 and, GTPases RAP1 and RHOA cascade in glomerular mesangial cells. Also binds the DEAR/FBXW7-AS1 receptor. Promotes mesenteric arterial wall remodeling via activation of ROCK signaling and subsequent colocalization of NFATC3 with F-actin filaments. NFATC3 then translocates to the nucleus where it subsequently promotes the transcription of the smooth muscle hypertrophy and differentiation marker ACTA2. The chain is Endothelin-1 (EDN1) from Cavia porcellus (Guinea pig).